We begin with the raw amino-acid sequence, 156 residues long: Small ribosomal subunit protein uS7 (156 aa).

It belongs to the universal ribosomal protein uS7 family. Part of the 30S ribosomal subunit. Contacts proteins S9 and S11.

One of the primary rRNA binding proteins, it binds directly to 16S rRNA where it nucleates assembly of the head domain of the 30S subunit. Is located at the subunit interface close to the decoding center, probably blocks exit of the E-site tRNA. In Streptococcus agalactiae serotype Ia (strain ATCC 27591 / A909 / CDC SS700), this protein is Small ribosomal subunit protein uS7.